A 150-amino-acid polypeptide reads, in one-letter code: Globin-3 (150 aa).

The 140-residue stretch at 11-150 (PLSAAEKTKI…MICILLRSAY (140 aa)) folds into the Globin domain. The heme b site is built by His74 and His106.

Belongs to the globin family. As to quaternary structure, monomer.

The sequence is that of Globin-3 from Petromyzon marinus (Sea lamprey).